The sequence spans 328 residues: Renalase (328 aa).

FAD is bound by residues Ala-13, 32–33 (DK), Arg-40, and 56–57 (QY). Residues 57–61 (YFTAR) and 96–98 (SPD) contribute to the substrate site. Ile-128 contributes to the FAD binding site. Residue Thr-185 participates in substrate binding. Asp-302 is a binding site for FAD. Arg-308 is a substrate binding site. Val-309 is a binding site for FAD.

This sequence belongs to the bacterial renalase family. FAD is required as a cofactor.

It carries out the reaction 1,2-dihydro-beta-NAD + O2 + H(+) = H2O2 + NAD(+). The enzyme catalyses 1,2-dihydro-beta-NADP + O2 + H(+) = H2O2 + NADP(+). The catalysed reaction is 1,6-dihydro-beta-NADP + O2 + H(+) = H2O2 + NADP(+). It catalyses the reaction 1,6-dihydro-beta-NAD + O2 + H(+) = H2O2 + NAD(+). Catalyzes the oxidation of the 1,2-dihydro- and 1,6-dihydro- isomeric forms of beta-NAD(P) back to beta-NAD(P)+. Has a preference for 1,2-dihydro-beta-NAD as substrate. May serve to protect primary metabolism dehydrogenases from inhibition by the 1,2-dihydro- and 1,6-dihydro-beta-NAD(P) isomers. The polypeptide is Renalase (Pseudomonas savastanoi pv. phaseolicola (strain 1448A / Race 6) (Pseudomonas syringae pv. phaseolicola (strain 1448A / Race 6))).